A 122-amino-acid chain; its full sequence is Large ribosomal subunit protein uL14 (122 aa).

It belongs to the universal ribosomal protein uL14 family. In terms of assembly, part of the 50S ribosomal subunit. Forms a cluster with proteins L3 and L19. In the 70S ribosome, L14 and L19 interact and together make contacts with the 16S rRNA in bridges B5 and B8.

In terms of biological role, binds to 23S rRNA. Forms part of two intersubunit bridges in the 70S ribosome. The polypeptide is Large ribosomal subunit protein uL14 (Desulfatibacillum aliphaticivorans).